The chain runs to 174 residues: Ubiquitin-fold modifier-conjugating enzyme 1 (174 aa).

Cys-119 functions as the Glycyl thioester intermediate in the catalytic mechanism.

This sequence belongs to the ubiquitin-conjugating enzyme family. UFC1 subfamily.

E2-like enzyme which forms an intermediate with UFM1 via a thioester linkage. The chain is Ubiquitin-fold modifier-conjugating enzyme 1 from Arabidopsis thaliana (Mouse-ear cress).